Consider the following 448-residue polypeptide: Probable D-serine dehydratase (448 aa).

Lys-119 carries the N6-(pyridoxal phosphate)lysine modification.

Belongs to the serine/threonine dehydratase family. DsdA subfamily. The cofactor is pyridoxal 5'-phosphate.

The enzyme catalyses D-serine = pyruvate + NH4(+). In Pseudomonas aeruginosa (strain ATCC 15692 / DSM 22644 / CIP 104116 / JCM 14847 / LMG 12228 / 1C / PRS 101 / PAO1), this protein is Probable D-serine dehydratase.